The chain runs to 569 residues: Synaptotagmin-4 (569 aa).

Residues 1 to 21 traverse the membrane as a helical segment; sequence MGFLFGLFIGIAVSFGLVVAF. The SMP-LTD domain maps to 67–251; sequence QRQKLNWLNL…WPVRKIIPIL (185 aa). The tract at residues 229–531 is phospholipid binding; that stretch reads EETIRDAIED…KIGRVIMTLT (303 aa). C2 domains are found at residues 245–366 and 426–543; these read RKII…DIWL and TDMK…QEWF. 5 residues coordinate Ca(2+): Asp-459, Asp-465, Asp-514, Asp-516, and Asp-521.

It belongs to the synaptotagmin family. Requires Ca(2+) as cofactor.

It localises to the membrane. May be involved in membrane trafficking. This chain is Synaptotagmin-4 (SYT4), found in Arabidopsis thaliana (Mouse-ear cress).